Here is a 347-residue protein sequence, read N- to C-terminus: Probable dual-specificity RNA methyltransferase RlmN (347 aa).

E94 (proton acceptor) is an active-site residue. A Radical SAM core domain is found at 100–319 (YPSRTIACIS…LDTLVKNGID (220 aa)). C107 and C334 form a disulfide bridge. [4Fe-4S] cluster is bound by residues C114, C118, and C121. Residues 161–162 (GE), S193, 216–218 (SLH), and N292 contribute to the S-adenosyl-L-methionine site. C334 functions as the S-methylcysteine intermediate in the catalytic mechanism.

This sequence belongs to the radical SAM superfamily. RlmN family. [4Fe-4S] cluster serves as cofactor.

The protein resides in the cytoplasm. It carries out the reaction adenosine(2503) in 23S rRNA + 2 reduced [2Fe-2S]-[ferredoxin] + 2 S-adenosyl-L-methionine = 2-methyladenosine(2503) in 23S rRNA + 5'-deoxyadenosine + L-methionine + 2 oxidized [2Fe-2S]-[ferredoxin] + S-adenosyl-L-homocysteine. The catalysed reaction is adenosine(37) in tRNA + 2 reduced [2Fe-2S]-[ferredoxin] + 2 S-adenosyl-L-methionine = 2-methyladenosine(37) in tRNA + 5'-deoxyadenosine + L-methionine + 2 oxidized [2Fe-2S]-[ferredoxin] + S-adenosyl-L-homocysteine. In terms of biological role, specifically methylates position 2 of adenine 2503 in 23S rRNA and position 2 of adenine 37 in tRNAs. This Petrotoga mobilis (strain DSM 10674 / SJ95) protein is Probable dual-specificity RNA methyltransferase RlmN.